A 109-amino-acid chain; its full sequence is Antifungal protein ginkbilobin-like protein (109 aa).

In terms of domain architecture, Gnk2-homologous spans 4–109 (TNFVSSACNT…CFIQYEQHSF (106 aa)). Cystine bridges form between C11-C87, C63-C72, and C75-C100. Residue N12 coordinates alpha-D-mannopyranose. Positions 94 and 105 each coordinate alpha-D-mannopyranose.

Its function is as follows. Exerts antifungal activity through its carbohydrate-binding specificity. This chain is Antifungal protein ginkbilobin-like protein, found in Picea abies (Norway spruce).